The sequence spans 116 residues: MRHGKAGRKLNRNSSARVALARAQATALLREGRIQTTLTKAKELRPYVEKLITTAKGGDLHARRLIARDIHDKDVVRKVMNEVAPRYAERQGGYTRILRVGTRRGDGVTMALIELV.

This sequence belongs to the bacterial ribosomal protein bL17 family. As to quaternary structure, part of the 50S ribosomal subunit. Contacts protein L32.

This is Large ribosomal subunit protein bL17 from Deinococcus geothermalis (strain DSM 11300 / CIP 105573 / AG-3a).